We begin with the raw amino-acid sequence, 272 residues long: 2-dehydro-3-deoxyphosphooctonate aldolase (272 aa).

The protein belongs to the KdsA family.

The protein localises to the cytoplasm. The catalysed reaction is D-arabinose 5-phosphate + phosphoenolpyruvate + H2O = 3-deoxy-alpha-D-manno-2-octulosonate-8-phosphate + phosphate. It participates in carbohydrate biosynthesis; 3-deoxy-D-manno-octulosonate biosynthesis; 3-deoxy-D-manno-octulosonate from D-ribulose 5-phosphate: step 2/3. Its pathway is bacterial outer membrane biogenesis; lipopolysaccharide biosynthesis. The sequence is that of 2-dehydro-3-deoxyphosphooctonate aldolase from Trichlorobacter lovleyi (strain ATCC BAA-1151 / DSM 17278 / SZ) (Geobacter lovleyi).